The following is a 251-amino-acid chain: Cell division protein ZapD (251 aa).

This sequence belongs to the ZapD family. As to quaternary structure, interacts with FtsZ.

Its subcellular location is the cytoplasm. In terms of biological role, cell division factor that enhances FtsZ-ring assembly. Directly interacts with FtsZ and promotes bundling of FtsZ protofilaments, with a reduction in FtsZ GTPase activity. In Burkholderia vietnamiensis (strain G4 / LMG 22486) (Burkholderia cepacia (strain R1808)), this protein is Cell division protein ZapD.